The following is a 199-amino-acid chain: Gamma-glutamylcyclotransferase 2-3 (199 aa).

Substrate is bound at residue valine 5 to serine 10. Catalysis depends on glutamate 86, which acts as the Proton acceptor.

It belongs to the gamma-glutamylcyclotransferase family. The cofactor is Mn(2+).

The protein localises to the cytoplasm. The catalysed reaction is glutathione = L-cysteinylglycine + 5-oxo-L-proline. In terms of biological role, converts GSH to 5-oxoproline and cysteine-glycine (Cys-Gly) dipeptide in vitro and plays a significant role in glutathione (GSH) homeostasis. Has no activity towards gamma-glutamyl-L-cysteine but possesses very low activity towards gamma-glutamyl-L-alanine. The chain is Gamma-glutamylcyclotransferase 2-3 from Arabidopsis thaliana (Mouse-ear cress).